Reading from the N-terminus, the 298-residue chain is GTP-binding protein REM 1 (298 aa).

The tract at residues M1–S73 is disordered. Positions T35–P55 are enriched in polar residues. Residue S51 is modified to Phosphoserine. Low complexity predominate over residues P63–S73. GTP contacts are provided by residues G87–T94 and N195–D198. The segment at A268–A287 is calmodulin-binding.

The protein belongs to the small GTPase superfamily. RGK family. In vitro, interacts with calmodulin in a calcium-dependent manner. Most highly expressed in the endothelial lining of the blood vessels in uterus and heart. Lower levels found in spleen, lymph node, kidney and testis. Also found in cells with secretory function such as the islets of Langerhans, lobule/duct epithelium in the breast, bile duct epithelium in the liver, surface epithelium in the endometrial glands of the uterus, colon mucosa and acinar cells in the pancreas and the prostate.

Functionally, promotes endothelial cell sprouting and actin cytoskeletal reorganization. May be involved in angiogenesis. May function in Ca(2+) signaling. This is GTP-binding protein REM 1 (REM1) from Homo sapiens (Human).